A 247-amino-acid chain; its full sequence is E3 SUMO-protein ligase NSE2 (247 aa).

M1 carries the post-translational modification N-acetylmethionine. Residues K90 and K107 each participate in a glycyl lysine isopeptide (Lys-Gly) (interchain with G-Cter in SUMO2) cross-link. S116 carries the post-translational modification Phosphoserine. Glycyl lysine isopeptide (Lys-Gly) (interchain with G-Cter in SUMO2) cross-links involve residues K125 and K130. The SP-RING-type zinc-finger motif lies at 154-240 (VDEDIIVTQS…LRRAIENHNK (87 aa)). Residues C185, H187, C210, and C215 each contribute to the Zn(2+) site.

This sequence belongs to the NSE2 family. Component of the SMC5-SMC6 complex which consists at least of SMC5, SMC6, NSMCE2, NSMCE1, NSMCE4A or EID3 and NSMCE3. Sumoylated, possibly via autosumoylation.

It localises to the nucleus. It is found in the chromosome. The protein resides in the telomere. The protein localises to the PML body. It functions in the pathway protein modification; protein sumoylation. Functionally, E3 SUMO-protein ligase component of the SMC5-SMC6 complex, a complex involved in DNA double-strand break repair by homologous recombination. Is not be required for the stability of the complex. The complex may promote sister chromatid homologous recombination by recruiting the SMC1-SMC3 cohesin complex to double-strand breaks. The complex is required for telomere maintenance via recombination in ALT (alternative lengthening of telomeres) cell lines and mediates sumoylation of shelterin complex (telosome) components which is proposed to lead to shelterin complex disassembly in ALT-associated PML bodies (APBs). Acts as an E3 ligase mediating SUMO attachment to various proteins such as SMC6L1 and TSNAX, the shelterin complex subunits TERF1, TERF2, TINF2 and TERF2IP, RAD51AP1, and maybe the cohesin components RAD21 and STAG2. Required for recruitment of telomeres to PML nuclear bodies. SUMO protein-ligase activity is required for the prevention of DNA damage-induced apoptosis by facilitating DNA repair, and for formation of APBs in ALT cell lines. Required for sister chromatid cohesion during prometaphase and mitotic progression. This is E3 SUMO-protein ligase NSE2 (NSMCE2) from Homo sapiens (Human).